Here is a 412-residue protein sequence, read N- to C-terminus: Gamma-glutamyl phosphate reductase (412 aa).

The protein belongs to the gamma-glutamyl phosphate reductase family.

Its subcellular location is the cytoplasm. The catalysed reaction is L-glutamate 5-semialdehyde + phosphate + NADP(+) = L-glutamyl 5-phosphate + NADPH + H(+). The protein operates within amino-acid biosynthesis; L-proline biosynthesis; L-glutamate 5-semialdehyde from L-glutamate: step 2/2. Catalyzes the NADPH-dependent reduction of L-glutamate 5-phosphate into L-glutamate 5-semialdehyde and phosphate. The product spontaneously undergoes cyclization to form 1-pyrroline-5-carboxylate. This chain is Gamma-glutamyl phosphate reductase, found in Bartonella bacilliformis (strain ATCC 35685 / KC583 / Herrer 020/F12,63).